A 215-amino-acid polypeptide reads, in one-letter code: UPF0502 protein YceH (215 aa).

It belongs to the UPF0502 family.

This is UPF0502 protein YceH from Salmonella paratyphi A (strain ATCC 9150 / SARB42).